Consider the following 870-residue polypeptide: DNA mismatch repair protein MutS (870 aa).

An ATP-binding site is contributed by 622-629; the sequence is GPNMGGKS.

This sequence belongs to the DNA mismatch repair MutS family.

Functionally, this protein is involved in the repair of mismatches in DNA. It is possible that it carries out the mismatch recognition step. This protein has a weak ATPase activity. This is DNA mismatch repair protein MutS from Methylibium petroleiphilum (strain ATCC BAA-1232 / LMG 22953 / PM1).